An 898-amino-acid polypeptide reads, in one-letter code: Zinc finger protein 574 (898 aa).

C2H2-type zinc fingers lie at residues 16–38, 76–98, and 126–148; these read YVCS…QNSH, YQCL…QELH, and YECV…RQTH. Ser-164 is subject to Phosphoserine. Residues 213-235 form a C2H2-type 4 zinc finger; it reads YKCSECSQLFQMPADFLEHQATH. The interval 243 to 305 is disordered; sequence AEEPATQQET…PRRSSSGESG (63 aa). Over residues 273–290 the composition is skewed to basic and acidic residues; sequence HSYELRNELRNGEAMGRD. Ser-301 bears the Phosphoserine mark. C2H2-type zinc fingers lie at residues 310 to 332, 337 to 359, 365 to 387, and 393 to 414; these read LFCS…LRSH, FKCP…LGDH, FLCV…RRAH, and HSCP…RRTH. Positions 417 to 460 are disordered; it reads GGVPLPTTPVPPEEPAISFPEPAPAETGELEAPELPVSEESSAE. C2H2-type zinc fingers lie at residues 467-490, 496-518, 524-546, 552-574, 580-602, and 608-631; these read YRCL…RFVH, HKCS…LRTH, FPCP…RLTH, YRCG…RLVH, YRCQ…RYHH, and YKCR…LVVH. A C2H2-type 15; degenerate zinc finger spans residues 637-660; sequence HRCPSCGAAFPSSLRLREHRCAAA. A C2H2-type 16 zinc finger spans residues 668–690; that stretch reads FECGTCGKKVGSAARLQAHEAAH. The interval 691 to 735 is disordered; sequence AAAGPGEVLAKEPPAPRAARATRTPVAPSPTALGGTTSAAPAAPA. Low complexity predominate over residues 707–734; it reads RAARATRTPVAPSPTALGGTTSAAPAAP. The residue at position 719 (Ser-719) is a Phosphoserine. The residue at position 726 (Thr-726) is a Phosphothreonine. 4 C2H2-type zinc fingers span residues 740 to 762, 768 to 790, 796 to 818, and 824 to 846; these read LECS…RRIH, YPCP…RRLH, FACE…RRIH, and YSCP…RKTH. Arg-834 is modified (asymmetric dimethylarginine).

Belongs to the krueppel C2H2-type zinc-finger protein family.

It is found in the nucleus. May be involved in transcriptional regulation. This is Zinc finger protein 574 (Znf574) from Rattus norvegicus (Rat).